Consider the following 466-residue polypeptide: Uronate isomerase (466 aa).

The protein belongs to the metallo-dependent hydrolases superfamily. Uronate isomerase family.

The enzyme catalyses D-glucuronate = D-fructuronate. The catalysed reaction is aldehydo-D-galacturonate = keto-D-tagaturonate. Its pathway is carbohydrate metabolism; pentose and glucuronate interconversion. The sequence is that of Uronate isomerase from Streptococcus agalactiae serotype V (strain ATCC BAA-611 / 2603 V/R).